The following is an 84-amino-acid chain: MAHKKAGGSTRNGRDSESKRLGVKRFGGESVLAGNIIVRQRGTKFHAGVNVGIGRDHTLFALTDGKVKFQVKGPNNRKFISIEA.

The tract at residues 1–22 is disordered; the sequence is MAHKKAGGSTRNGRDSESKRLG.

This sequence belongs to the bacterial ribosomal protein bL27 family.

In Shewanella frigidimarina (strain NCIMB 400), this protein is Large ribosomal subunit protein bL27.